A 158-amino-acid chain; its full sequence is Putative pre-16S rRNA nuclease (158 aa).

It belongs to the YqgF nuclease family.

The protein resides in the cytoplasm. Could be a nuclease involved in processing of the 5'-end of pre-16S rRNA. The protein is Putative pre-16S rRNA nuclease of Acidiphilium cryptum (strain JF-5).